The primary structure comprises 84 residues: uncharacterized protein (84 aa).

This is an uncharacterized protein from Micrococcus luteus (Micrococcus lysodeikticus).